A 299-amino-acid polypeptide reads, in one-letter code: Ribosomal protein L11 methyltransferase (299 aa).

S-adenosyl-L-methionine contacts are provided by threonine 149, glycine 170, aspartate 192, and asparagine 234.

This sequence belongs to the methyltransferase superfamily. PrmA family.

It is found in the cytoplasm. It carries out the reaction L-lysyl-[protein] + 3 S-adenosyl-L-methionine = N(6),N(6),N(6)-trimethyl-L-lysyl-[protein] + 3 S-adenosyl-L-homocysteine + 3 H(+). In terms of biological role, methylates ribosomal protein L11. This is Ribosomal protein L11 methyltransferase from Chromohalobacter salexigens (strain ATCC BAA-138 / DSM 3043 / CIP 106854 / NCIMB 13768 / 1H11).